We begin with the raw amino-acid sequence, 63 residues long: MEWKLNLLLYLALFFFLLFLLFLLLFVVIKQLKNSVANTAGTLQPGRLSLHREPWGFNNEQAV.

Important for interaction with SLC2A1 and SLC2A3 regions lie at residues 7-29 and 51-57; these read LLLY…FVVI and HREPWGF. Residues 9–29 traverse the membrane as a helical segment; that stretch reads LYLALFFFLLFLLFLLLFVVI.

As to quaternary structure, interacts with glucose transporters SLC2A1/GLUT1 and SLC2A3/GLUT3; the interactions may promote SLC2A1- and SLC2A3-mediated glucose transport to meet the energy needs of mesendoderm differentiation. Accumulates in the posterior primitive streak of mid-gastrulation embryos at 7.0 dpc. In the adult, highly abundant and enriched in the brain compared to other organs.

It is found in the cell membrane. In terms of biological role, required for mesendoderm differentiation. Interacts with glucose transporters and promotes glucose uptake. Probably augments the glucose uptake capacity of glucose transporter proteins to meet the energy needs of mesendoderm differentiation. This is Small integral membrane protein 43 from Mus musculus (Mouse).